We begin with the raw amino-acid sequence, 174 residues long: Major allergen Can f 1 (174 aa).

A signal peptide spans 1-18; sequence MKTLLLTIGFSLIAILQA. Cys-78 and Cys-169 form a disulfide bridge. Asn-80 is a glycosylation site (N-linked (GlcNAc...) asparagine).

This sequence belongs to the calycin superfamily. Lipocalin family. In terms of tissue distribution, tongue epithelial tissue.

It localises to the secreted. This Canis lupus familiaris (Dog) protein is Major allergen Can f 1.